The following is a 281-amino-acid chain: Digeranylgeranylglyceryl phosphate synthase (281 aa).

Helical transmembrane passes span Ile-88–Ile-108, Ala-132–Leu-152, Gly-200–Phe-220, Ile-225–Ile-245, and Leu-261–Val-281.

The protein belongs to the UbiA prenyltransferase family. DGGGP synthase subfamily. It depends on Mg(2+) as a cofactor.

Its subcellular location is the cell membrane. It carries out the reaction sn-3-O-(geranylgeranyl)glycerol 1-phosphate + (2E,6E,10E)-geranylgeranyl diphosphate = 2,3-bis-O-(geranylgeranyl)-sn-glycerol 1-phosphate + diphosphate. The protein operates within membrane lipid metabolism; glycerophospholipid metabolism. In terms of biological role, prenyltransferase that catalyzes the transfer of the geranylgeranyl moiety of geranylgeranyl diphosphate (GGPP) to the C2 hydroxyl of (S)-3-O-geranylgeranylglyceryl phosphate (GGGP). This reaction is the second ether-bond-formation step in the biosynthesis of archaeal membrane lipids. The sequence is that of Digeranylgeranylglyceryl phosphate synthase from Korarchaeum cryptofilum (strain OPF8).